Consider the following 391-residue polypeptide: Pectin acetylesterase 7 (391 aa).

The first 23 residues, 1-23, serve as a signal peptide directing secretion; sequence MGRLKQCWSSLLVLAVLVIGTGA. Residues Ser-171, Asp-267, and His-334 each act as charge relay system in the active site.

This sequence belongs to the pectinacetylesterase family.

The protein resides in the secreted. It localises to the cell wall. Functionally, hydrolyzes acetyl esters in homogalacturonan regions of pectin. In type I primary cell wall, galacturonic acid residues of pectin can be acetylated at the O-2 and O-3 positions. Decreasing the degree of acetylation of pectin gels in vitro alters their physical properties. The polypeptide is Pectin acetylesterase 7 (Arabidopsis thaliana (Mouse-ear cress)).